The chain runs to 270 residues: tRNA pseudouridine synthase A (270 aa).

Asp-51 acts as the Nucleophile in catalysis. Substrate is bound at residue Tyr-109.

The protein belongs to the tRNA pseudouridine synthase TruA family. In terms of assembly, homodimer.

It catalyses the reaction uridine(38/39/40) in tRNA = pseudouridine(38/39/40) in tRNA. Functionally, formation of pseudouridine at positions 38, 39 and 40 in the anticodon stem and loop of transfer RNAs. This is tRNA pseudouridine synthase A from Burkholderia mallei (strain ATCC 23344).